Consider the following 136-residue polypeptide: Probable acyltransferase SID5 (136 aa).

It functions in the pathway siderophore biosynthesis. Functionally, probable acyltransferase; part of the gene cluster that mediates the biosynthesis of hydroxamate-containing siderophores that play a critical role in virulence via intracellular iron acquisition during macrophage infection. This Ajellomyces capsulatus (Darling's disease fungus) protein is Probable acyltransferase SID5.